A 282-amino-acid chain; its full sequence is Probable endonuclease 4 (282 aa).

9 residues coordinate Zn(2+): His69, His109, Glu145, Asp179, His182, His216, Asp229, His231, and Glu261.

This sequence belongs to the AP endonuclease 2 family. Zn(2+) is required as a cofactor.

The catalysed reaction is Endonucleolytic cleavage to 5'-phosphooligonucleotide end-products.. Functionally, endonuclease IV plays a role in DNA repair. It cleaves phosphodiester bonds at apurinic or apyrimidinic (AP) sites, generating a 3'-hydroxyl group and a 5'-terminal sugar phosphate. This Chlorobium chlorochromatii (strain CaD3) protein is Probable endonuclease 4.